Consider the following 347-residue polypeptide: Protein-glutamate methylesterase/protein-glutamine glutaminase (347 aa).

One can recognise a Response regulatory domain in the interval 3-119; the sequence is EALVVDDSHF…STELSGHSEE (117 aa). Asp53 bears the 4-aspartylphosphate mark. A disordered region spans residues 132 to 154; the sequence is PTAGHDVEMEPASPPDATTSEYA. In terms of domain architecture, CheB-type methylesterase spans 152–346; that stretch reads EYADNPTLLI…EAIADSIRRT (195 aa). Active-site residues include Ser164, His191, and Asp288.

Belongs to the CheB family. Phosphorylated by CheA. Phosphorylation of the N-terminal regulatory domain activates the methylesterase activity.

The protein localises to the cytoplasm. The catalysed reaction is [protein]-L-glutamate 5-O-methyl ester + H2O = L-glutamyl-[protein] + methanol + H(+). It carries out the reaction L-glutaminyl-[protein] + H2O = L-glutamyl-[protein] + NH4(+). Functionally, involved in the modulation of the chemotaxis system; catalyzes the demethylation of specific methylglutamate residues introduced into the Htr transducer proteins (methyl-accepting chemotaxis proteins) by CheR. Also required for Htr deamidations, at least at a specific glutamine-glutamate pair in HTR-II and a specific aspartate-glutamine pair in Htr4. This Halobacterium salinarum (strain ATCC 29341 / DSM 671 / R1) protein is Protein-glutamate methylesterase/protein-glutamine glutaminase.